Here is a 465-residue protein sequence, read N- to C-terminus: ATP-dependent protease ATPase subunit HslU (465 aa).

Residues V20, 62–67, D277, E343, and R415 contribute to the ATP site; that span reads GVGKTE.

The protein belongs to the ClpX chaperone family. HslU subfamily. As to quaternary structure, a double ring-shaped homohexamer of HslV is capped on each side by a ring-shaped HslU homohexamer. The assembly of the HslU/HslV complex is dependent on binding of ATP.

It is found in the cytoplasm. ATPase subunit of a proteasome-like degradation complex; this subunit has chaperone activity. The binding of ATP and its subsequent hydrolysis by HslU are essential for unfolding of protein substrates subsequently hydrolyzed by HslV. HslU recognizes the N-terminal part of its protein substrates and unfolds these before they are guided to HslV for hydrolysis. This is ATP-dependent protease ATPase subunit HslU from Geobacillus kaustophilus (strain HTA426).